The sequence spans 504 residues: 2,3-bisphosphoglycerate-independent phosphoglycerate mutase (504 aa).

2 residues coordinate Mn(2+): Asp11 and Ser61. Ser61 functions as the Phosphoserine intermediate in the catalytic mechanism. Residues His122, Arg152–Asp153, Arg183, Arg189, Arg255–Arg258, and Lys329 contribute to the substrate site. 5 residues coordinate Mn(2+): Asp396, His400, Asp437, His438, and His455.

It belongs to the BPG-independent phosphoglycerate mutase family. Monomer. Requires Mn(2+) as cofactor.

The enzyme catalyses (2R)-2-phosphoglycerate = (2R)-3-phosphoglycerate. The protein operates within carbohydrate degradation; glycolysis; pyruvate from D-glyceraldehyde 3-phosphate: step 3/5. In terms of biological role, catalyzes the interconversion of 2-phosphoglycerate and 3-phosphoglycerate. The protein is 2,3-bisphosphoglycerate-independent phosphoglycerate mutase of Bacteroides fragilis (strain YCH46).